We begin with the raw amino-acid sequence, 399 residues long: Nicotinate phosphoribosyltransferase (399 aa).

A Phosphohistidine; by autocatalysis modification is found at H217.

Belongs to the NAPRTase family. In terms of processing, transiently phosphorylated on a His residue during the reaction cycle. Phosphorylation strongly increases the affinity for substrates and increases the rate of nicotinate D-ribonucleotide production. Dephosphorylation regenerates the low-affinity form of the enzyme, leading to product release.

The catalysed reaction is nicotinate + 5-phospho-alpha-D-ribose 1-diphosphate + ATP + H2O = nicotinate beta-D-ribonucleotide + ADP + phosphate + diphosphate. It participates in cofactor biosynthesis; NAD(+) biosynthesis; nicotinate D-ribonucleotide from nicotinate: step 1/1. In terms of biological role, catalyzes the synthesis of beta-nicotinate D-ribonucleotide from nicotinate and 5-phospho-D-ribose 1-phosphate at the expense of ATP. This is Nicotinate phosphoribosyltransferase from Burkholderia ambifaria (strain MC40-6).